A 650-amino-acid chain; its full sequence is tRNA-dihydrouridine(47) synthase [NAD(P)(+)]-like (650 aa).

Disordered stretches follow at residues 1–24 (MAEGTAEAPLENGGGGDSGAGALE) and 46–120 (EAKG…NYDK). At alanine 2 the chain carries N-acetylalanine. Basic and acidic residues-rich tracts occupy residues 48 to 58 (KGQEKTCRETE) and 70 to 79 (PEAKRIRLED). The segment covering 101 to 113 (KRARGQNKGRPHV) has biased composition (basic residues). 2 consecutive C3H1-type zinc fingers follow at residues 118–148 (YDKNRLCPSLIQESAAKCFFGDRCRFLHDVG) and 156–186 (ADLGPRCVLFETFGRCPYGVTCRFAGAHLRP). A disordered region spans residues 235–284 (FSQGPTPAAAVPEGTAAEGAPRQENCGAQQVPAGPGTSTPPSSPVRTCGP). Residue serine 236 is modified to Phosphoserine. Threonine 273 carries the phosphothreonine modification. Serine 276 and serine 277 each carry phosphoserine. FMN-binding positions include 311 to 313 (PLT) and glutamine 365. Cysteine 396 acts as the Proton donor in catalysis. Lysine 416 is covalently cross-linked (Glycyl lysine isopeptide (Lys-Gly) (interchain with G-Cter in SUMO2)). FMN-binding positions include lysine 435, histidine 465, 497–499 (NGD), and 520–521 (AR).

The protein belongs to the Dus family. Dus3 subfamily. The cofactor is FMN.

The enzyme catalyses 5,6-dihydrouridine(47) in tRNA + NAD(+) = uridine(47) in tRNA + NADH + H(+). The catalysed reaction is 5,6-dihydrouridine(47) in tRNA + NADP(+) = uridine(47) in tRNA + NADPH + H(+). It carries out the reaction a 5,6-dihydrouridine in mRNA + NAD(+) = a uridine in mRNA + NADH + H(+). It catalyses the reaction a 5,6-dihydrouridine in mRNA + NADP(+) = a uridine in mRNA + NADPH + H(+). Catalyzes the synthesis of dihydrouridine, a modified base, in various RNAs, such as tRNAs, mRNAs and some long non-coding RNAs (lncRNAs). Mainly modifies the uridine in position 47 (U47) in the D-loop of most cytoplasmic tRNAs. Also able to mediate the formation of dihydrouridine in some mRNAs, thereby regulating their translation. The protein is tRNA-dihydrouridine(47) synthase [NAD(P)(+)]-like of Homo sapiens (Human).